The chain runs to 267 residues: RWD domain-containing protein 3 (267 aa).

The RWD domain occupies 7-114 (EELSVLAAIF…LWIQQNLRHI (108 aa)). Interaction with UBE2I/UBC9 regions lie at residues 13-15 (AAI) and 100-102 (VHE).

As to quaternary structure, isoform 1 and isoform 2 interact with UBE2I/UBC9. Isoform 1 shows a greater interaction with NFKBIA and HIF1A as compared to isoform 2. Isoform 2 interacts with NCOA2 and NR3C1. In terms of tissue distribution, isoform 1 and isoform 2 are expressed in glioma tumors (at protein level). Expressed in a wide number of tissues with highest expression in cerebellum, pituitary, heart, kidney, liver, stomach, pancreas, prostate and spleen. Low levels in thalamus, spinal cord, esophagus, thymus, lung and peripheral blood leukocytes. A higher level expression seen in pituitary tumors as compared to the pituitary gland.

It is found in the nucleus. The protein localises to the cytoplasm. Enhancer of SUMO conjugation. Via its interaction with UBE2I/UBC9, increases SUMO conjugation to proteins by promoting the binding of E1 and E2 enzymes, thioester linkage between SUMO and UBE2I/UBC9 and transfer of SUMO to specific target proteins which include HIF1A, PIAS, NFKBIA, NR3C1 and TOP1. Isoform 1 and isoform 2 positively regulate the NF-kappa-B signaling pathway by enhancing the sumoylation of NF-kappa-B inhibitor alpha (NFKBIA), promoting its stabilization which consequently leads to an increased inhibition of NF-kappa-B transcriptional activity. Isoform 1 and isoform 2 negatively regulate the hypoxia-inducible factor-1 alpha (HIF1A) signaling pathway by increasing the sumoylation of HIF1A, promoting its stabilization, transcriptional activity and the expression of its target gene VEGFA during hypoxia. Isoform 2 promotes the sumoylation and transcriptional activity of the glucocorticoid receptor NR3C1 and enhances the interaction of SUMO1 and NR3C1 with UBE2I/UBC9. Has no effect on ubiquitination. This chain is RWD domain-containing protein 3 (RWDD3), found in Homo sapiens (Human).